The primary structure comprises 87 residues: Small ribosomal subunit protein uS17 (87 aa).

It belongs to the universal ribosomal protein uS17 family. As to quaternary structure, part of the 30S ribosomal subunit.

Functionally, one of the primary rRNA binding proteins, it binds specifically to the 5'-end of 16S ribosomal RNA. This is Small ribosomal subunit protein uS17 from Syntrophobacter fumaroxidans (strain DSM 10017 / MPOB).